We begin with the raw amino-acid sequence, 255 residues long: Small ribosomal subunit protein eS1 (255 aa).

Alanine 2 is subject to N-acetylalanine; partial.

The protein belongs to the eukaryotic ribosomal protein eS1 family. As to quaternary structure, component of the small ribosomal subunit. Mature ribosomes consist of a small (40S) and a large (60S) subunit. The 40S subunit contains about 33 different proteins and 1 molecule of RNA (18S). The 60S subunit contains about 49 different proteins and 3 molecules of RNA (25S, 5.8S and 5S).

Its subcellular location is the cytoplasm. The polypeptide is Small ribosomal subunit protein eS1 (Vanderwaltozyma polyspora (strain ATCC 22028 / DSM 70294 / BCRC 21397 / CBS 2163 / NBRC 10782 / NRRL Y-8283 / UCD 57-17) (Kluyveromyces polysporus)).